The primary structure comprises 26 residues: PKPKKKQRWTPLEISLEVLVLVLVXI.

This sequence belongs to the peptidase M13 family. It depends on Zn(2+) as a cofactor.

The protein localises to the cell membrane. It carries out the reaction Preferential cleavage of polypeptides between hydrophobic residues, particularly with Phe or Tyr at P1'.. It catalyses the reaction substance P + H2O = substance P(1-9) + L-Leu-L-Met-NH2. The enzyme catalyses substance P + H2O = substance P(1-7) + L-Phe-Gly-L-Leu-L-Met-NH2. The catalysed reaction is neurotensin + H2O = neurotensin(1-11) + L-isoleucyl-L-leucine. It carries out the reaction neurotensin + H2O = neurotensin(1-10) + L-tyrosyl-L-isoleucyl-L-leucine. Its function is as follows. Thermolysin-like specificity, but is almost confined on acting on polypeptides of up to 30 amino acids. Biologically important in the destruction of opioid peptides such as Met- and Leu-enkephalins by cleavage of a Gly-Phe bond. Catalyzes cleavage of bradykinin, substance P and neurotensin peptides. Able to cleave angiotensin-1, angiotensin-2 and angiotensin 1-9. Involved in the degradation of atrial natriuretic factor (ANF) and brain natriuretic factor (BNP(1-32)). Displays UV-inducible elastase activity toward skin preelastic and elastic fibers. The protein is Neprilysin (MME) of Sus scrofa (Pig).